The chain runs to 145 residues: 3-dehydroquinate dehydratase (145 aa).

Tyrosine 22 serves as the catalytic Proton acceptor. Residues asparagine 71, histidine 77, and aspartate 84 each coordinate substrate. Histidine 97 serves as the catalytic Proton donor. Residues 98–99 and arginine 108 each bind substrate; that span reads LS.

Belongs to the type-II 3-dehydroquinase family. Homododecamer.

It catalyses the reaction 3-dehydroquinate = 3-dehydroshikimate + H2O. The protein operates within metabolic intermediate biosynthesis; chorismate biosynthesis; chorismate from D-erythrose 4-phosphate and phosphoenolpyruvate: step 3/7. Catalyzes a trans-dehydration via an enolate intermediate. This chain is 3-dehydroquinate dehydratase, found in Francisella tularensis subsp. mediasiatica (strain FSC147).